We begin with the raw amino-acid sequence, 143 residues long: Ribosome-binding factor A (143 aa).

The disordered stretch occupies residues 123–143 (DKSLQENYKQNDKETKAEKLR).

The protein belongs to the RbfA family. As to quaternary structure, monomer. Binds 30S ribosomal subunits, but not 50S ribosomal subunits or 70S ribosomes.

It is found in the cytoplasm. Functionally, one of several proteins that assist in the late maturation steps of the functional core of the 30S ribosomal subunit. Associates with free 30S ribosomal subunits (but not with 30S subunits that are part of 70S ribosomes or polysomes). Required for efficient processing of 16S rRNA. May interact with the 5'-terminal helix region of 16S rRNA. This is Ribosome-binding factor A from Francisella tularensis subsp. novicida (strain U112).